Reading from the N-terminus, the 375-residue chain is MATSKDYYEILGVSRDADQKEIKKAYRRLARKYHPDINKDDPDAEEKFKEISEAYEILSDPDKRARYDQYGHAGINEEDFNFEDFAQRGFGGFDDIFDMFFGGGMGRRRRGPRPGADLQYRMKIPFEDAAFGTTKKITIPRTETCDTCNGTGAKPGTSPKTCPQCNGSGQVRYTQRTPFGQFAQTRTCDRCGGRGTIIDDPCPTCQGSGKVRKQRKITVKIPPGVDTGTRLRMPNEGEAGDKGAPNGDLYIIIEVEPHDIFERKDDDIYCEVPISFVQAALGDKIEVPTLEGKVKFTIPEGTQPDTVFRLKNKGIPHLNGRGRGDEFIKVRVVIPEKMNDEQKELLRKFAEISGDEINPEQKSFIKKVKDAFGVG.

The J domain maps to 6–71 (DYYEILGVSR…DKRARYDQYG (66 aa)). The CR-type zinc-finger motif lies at 132–214 (GTTKKITIPR…CQGSGKVRKQ (83 aa)). Zn(2+) is bound by residues Cys145, Cys148, Cys162, Cys165, Cys188, Cys191, Cys202, and Cys205. CXXCXGXG motif repeat units lie at residues 145 to 152 (CDTCNGTG), 162 to 169 (CPQCNGSG), 188 to 195 (CDRCGGRG), and 202 to 209 (CPTCQGSG). Residues 222–243 (PPGVDTGTRLRMPNEGEAGDKG) form a disordered region.

The protein belongs to the DnaJ family. As to quaternary structure, homodimer. The cofactor is Zn(2+).

The protein localises to the cytoplasm. Functionally, participates actively in the response to hyperosmotic and heat shock by preventing the aggregation of stress-denatured proteins and by disaggregating proteins, also in an autonomous, DnaK-independent fashion. Unfolded proteins bind initially to DnaJ; upon interaction with the DnaJ-bound protein, DnaK hydrolyzes its bound ATP, resulting in the formation of a stable complex. GrpE releases ADP from DnaK; ATP binding to DnaK triggers the release of the substrate protein, thus completing the reaction cycle. Several rounds of ATP-dependent interactions between DnaJ, DnaK and GrpE are required for fully efficient folding. Also involved, together with DnaK and GrpE, in the DNA replication of plasmids through activation of initiation proteins. The sequence is that of Chaperone protein DnaJ from Halothermothrix orenii (strain H 168 / OCM 544 / DSM 9562).